A 239-amino-acid polypeptide reads, in one-letter code: Pyridoxine 5'-phosphate synthase (239 aa).

A 3-amino-2-oxopropyl phosphate-binding site is contributed by Asn-7. 9–10 (DH) serves as a coordination point for 1-deoxy-D-xylulose 5-phosphate. Arg-18 provides a ligand contact to 3-amino-2-oxopropyl phosphate. Catalysis depends on His-43, which acts as the Proton acceptor. 1-deoxy-D-xylulose 5-phosphate contacts are provided by Arg-45 and His-50. Glu-70 functions as the Proton acceptor in the catalytic mechanism. Thr-100 contacts 1-deoxy-D-xylulose 5-phosphate. His-191 (proton donor) is an active-site residue. 3-amino-2-oxopropyl phosphate-binding positions include Gly-192 and 213-214 (GH).

Belongs to the PNP synthase family. In terms of assembly, homooctamer; tetramer of dimers.

It localises to the cytoplasm. The enzyme catalyses 3-amino-2-oxopropyl phosphate + 1-deoxy-D-xylulose 5-phosphate = pyridoxine 5'-phosphate + phosphate + 2 H2O + H(+). The protein operates within cofactor biosynthesis; pyridoxine 5'-phosphate biosynthesis; pyridoxine 5'-phosphate from D-erythrose 4-phosphate: step 5/5. In terms of biological role, catalyzes the complicated ring closure reaction between the two acyclic compounds 1-deoxy-D-xylulose-5-phosphate (DXP) and 3-amino-2-oxopropyl phosphate (1-amino-acetone-3-phosphate or AAP) to form pyridoxine 5'-phosphate (PNP) and inorganic phosphate. In Geobacter sp. (strain M21), this protein is Pyridoxine 5'-phosphate synthase.